A 452-amino-acid polypeptide reads, in one-letter code: Adenylosuccinate synthetase isozyme 1 (452 aa).

The tract at residues 1 to 22 (MSGTRASNDRSSHPGGHKRPRY) is disordered. Residues 37–43 (GDEGKGK) and 65–67 (GHT) contribute to the GTP site. Residue Asp-38 is the Proton acceptor of the active site. Residues Asp-38 and Gly-65 each contribute to the Mg(2+) site. Asp-38 is a binding site for substrate. IMP contacts are provided by residues 38–41 (DEGK), 63–66 (NAGH), Thr-158, Arg-172, Asn-251, Thr-266, and Arg-330. His-66 serves as the catalytic Proton donor. Residue 326 to 332 (VTTGRKR) coordinates substrate. GTP is bound by residues Arg-332, 358–360 (KLD), and 440–443 (GVGK).

It belongs to the adenylosuccinate synthetase family. In terms of assembly, homodimer. It depends on Mg(2+) as a cofactor.

It localises to the cytoplasm. It carries out the reaction IMP + L-aspartate + GTP = N(6)-(1,2-dicarboxyethyl)-AMP + GDP + phosphate + 2 H(+). The protein operates within purine metabolism; AMP biosynthesis via de novo pathway; AMP from IMP: step 1/2. Its function is as follows. Component of the purine nucleotide cycle (PNC), which interconverts IMP and AMP to regulate the nucleotide levels in various tissues, and which contributes to glycolysis and ammoniagenesis. Catalyzes the first committed step in the biosynthesis of AMP from IMP. This chain is Adenylosuccinate synthetase isozyme 1 (adss1), found in Xenopus tropicalis (Western clawed frog).